Here is a 1229-residue protein sequence, read N- to C-terminus: Alpha,alpha-trehalose-phosphate synthase [UDP-forming] 2 (1229 aa).

Residues 196–233 (VSSDSEGEEAIHNVRSGTHTESESEEDPKAPRSGLATS) form a disordered region. Over residues 213–225 (THTESESEEDPKA) the composition is skewed to basic and acidic residues.

This sequence in the N-terminal section; belongs to the glycosyltransferase 20 family. In the C-terminal section; belongs to the gob-1 trehalose phosphatase family.

It carries out the reaction D-glucose 6-phosphate + UDP-alpha-D-glucose = alpha,alpha-trehalose 6-phosphate + UDP + H(+). Its function is as follows. Catalyzes the production of trehalose from glucose-6-phosphate and UDP-alpha-D-glucose in a 2 step process. The chain is Alpha,alpha-trehalose-phosphate synthase [UDP-forming] 2 (tps-2) from Caenorhabditis elegans.